A 517-amino-acid chain; its full sequence is Acetyl-coenzyme A carboxylase carboxyl transferase subunit beta, chloroplastic (517 aa).

4 stretches are compositionally biased toward basic and acidic residues: residues 1–17 (MKPT…KSNE), 24–41 (GDNK…KSNE), 48–65 (GDNK…KSNE), and 72–81 (GDKQKDKKDG). Disordered regions lie at residues 1 to 179 (MKPT…KEEE) and 204 to 234 (KHRD…DSEA). A compositionally biased stretch (acidic residues) spans 87–131 (YDDEYEEDLEYDDEYEEDLEYDDEYEEDLEYDDEEYDDEYEEDLE). 2 stretches are compositionally biased toward basic and acidic residues: residues 132-179 (GDNK…KEEE) and 209-229 (KSVP…RDTD). Positions 243–514 (LWVHCKLCSG…NSQVINIYNY (272 aa)) constitute a CoA carboxyltransferase N-terminal domain. Zn(2+)-binding residues include Cys247, Cys250, Cys266, and Cys269. The C4-type zinc-finger motif lies at 247–269 (CKLCSGFNYKKILKSKNNVCEQC).

Belongs to the AccD/PCCB family. As to quaternary structure, acetyl-CoA carboxylase is a heterohexamer composed of biotin carboxyl carrier protein, biotin carboxylase and 2 subunits each of ACCase subunit alpha and ACCase plastid-coded subunit beta (accD). Requires Zn(2+) as cofactor.

It localises to the plastid. Its subcellular location is the chloroplast stroma. The catalysed reaction is N(6)-carboxybiotinyl-L-lysyl-[protein] + acetyl-CoA = N(6)-biotinyl-L-lysyl-[protein] + malonyl-CoA. The protein operates within lipid metabolism; malonyl-CoA biosynthesis; malonyl-CoA from acetyl-CoA: step 1/1. In terms of biological role, component of the acetyl coenzyme A carboxylase (ACC) complex. Biotin carboxylase (BC) catalyzes the carboxylation of biotin on its carrier protein (BCCP) and then the CO(2) group is transferred by the transcarboxylase to acetyl-CoA to form malonyl-CoA. The protein is Acetyl-coenzyme A carboxylase carboxyl transferase subunit beta, chloroplastic of Oenothera elata subsp. hookeri (Hooker's evening primrose).